The following is a 167-amino-acid chain: SsrA-binding protein (167 aa).

A disordered region spans residues 137-167 (GKQSHDKRDAAKERDWQRDKQRVMRRHNRDA). The span at 139-158 (QSHDKRDAAKERDWQRDKQR) shows a compositional bias: basic and acidic residues.

This sequence belongs to the SmpB family.

Its subcellular location is the cytoplasm. Required for rescue of stalled ribosomes mediated by trans-translation. Binds to transfer-messenger RNA (tmRNA), required for stable association of tmRNA with ribosomes. tmRNA and SmpB together mimic tRNA shape, replacing the anticodon stem-loop with SmpB. tmRNA is encoded by the ssrA gene; the 2 termini fold to resemble tRNA(Ala) and it encodes a 'tag peptide', a short internal open reading frame. During trans-translation Ala-aminoacylated tmRNA acts like a tRNA, entering the A-site of stalled ribosomes, displacing the stalled mRNA. The ribosome then switches to translate the ORF on the tmRNA; the nascent peptide is terminated with the 'tag peptide' encoded by the tmRNA and targeted for degradation. The ribosome is freed to recommence translation, which seems to be the essential function of trans-translation. This is SsrA-binding protein from Xanthomonas campestris pv. campestris (strain 8004).